Reading from the N-terminus, the 120-residue chain is Small ribosomal subunit protein uS13 (120 aa).

The interval 93 to 120 (RKGLPVRGQTTKNNARTRKGKKKTVGSK) is disordered. Over residues 107 to 120 (ARTRKGKKKTVGSK) the composition is skewed to basic residues.

The protein belongs to the universal ribosomal protein uS13 family. As to quaternary structure, part of the 30S ribosomal subunit. Forms a loose heterodimer with protein S19. Forms two bridges to the 50S subunit in the 70S ribosome.

Its function is as follows. Located at the top of the head of the 30S subunit, it contacts several helices of the 16S rRNA. In the 70S ribosome it contacts the 23S rRNA (bridge B1a) and protein L5 of the 50S subunit (bridge B1b), connecting the 2 subunits; these bridges are implicated in subunit movement. Contacts the tRNAs in the A and P-sites. The protein is Small ribosomal subunit protein uS13 of Helicobacter pylori (strain P12).